A 296-amino-acid polypeptide reads, in one-letter code: uncharacterized protein (296 aa).

It is found in the mitochondrion. This is an uncharacterized protein from Podospora anserina (strain S / ATCC MYA-4624 / DSM 980 / FGSC 10383) (Pleurage anserina).